Reading from the N-terminus, the 67-residue chain is Probable tautomerase bsl7456 (67 aa).

Residue proline 2 is the Proton acceptor; via imino nitrogen of the active site.

Belongs to the 4-oxalocrotonate tautomerase family.

This chain is Probable tautomerase bsl7456, found in Bradyrhizobium diazoefficiens (strain JCM 10833 / BCRC 13528 / IAM 13628 / NBRC 14792 / USDA 110).